A 355-amino-acid chain; its full sequence is UDP-N-acetylglucosamine--N-acetylmuramyl-(pentapeptide) pyrophosphoryl-undecaprenol N-acetylglucosamine transferase (355 aa).

UDP-N-acetyl-alpha-D-glucosamine-binding positions include 15-17, Asn-127, Arg-163, Ser-191, Ile-244, 263-268, and Gln-288; these read TGG and ALTVSE.

Belongs to the glycosyltransferase 28 family. MurG subfamily.

It localises to the cell inner membrane. It carries out the reaction di-trans,octa-cis-undecaprenyl diphospho-N-acetyl-alpha-D-muramoyl-L-alanyl-D-glutamyl-meso-2,6-diaminopimeloyl-D-alanyl-D-alanine + UDP-N-acetyl-alpha-D-glucosamine = di-trans,octa-cis-undecaprenyl diphospho-[N-acetyl-alpha-D-glucosaminyl-(1-&gt;4)]-N-acetyl-alpha-D-muramoyl-L-alanyl-D-glutamyl-meso-2,6-diaminopimeloyl-D-alanyl-D-alanine + UDP + H(+). The protein operates within cell wall biogenesis; peptidoglycan biosynthesis. In terms of biological role, cell wall formation. Catalyzes the transfer of a GlcNAc subunit on undecaprenyl-pyrophosphoryl-MurNAc-pentapeptide (lipid intermediate I) to form undecaprenyl-pyrophosphoryl-MurNAc-(pentapeptide)GlcNAc (lipid intermediate II). In Salmonella paratyphi A (strain ATCC 9150 / SARB42), this protein is UDP-N-acetylglucosamine--N-acetylmuramyl-(pentapeptide) pyrophosphoryl-undecaprenol N-acetylglucosamine transferase.